The chain runs to 282 residues: NADPH-dependent 7-cyano-7-deazaguanine reductase (282 aa).

88 to 90 (IES) serves as a coordination point for substrate. Residue 90–91 (SK) coordinates NADPH. Cys190 acts as the Thioimide intermediate in catalysis. The Proton donor role is filled by Asp197. Residue 229–230 (HE) participates in substrate binding. 258–259 (RG) is an NADPH binding site.

This sequence belongs to the GTP cyclohydrolase I family. QueF type 2 subfamily. In terms of assembly, homodimer.

It localises to the cytoplasm. The catalysed reaction is 7-aminomethyl-7-carbaguanine + 2 NADP(+) = 7-cyano-7-deazaguanine + 2 NADPH + 3 H(+). It participates in tRNA modification; tRNA-queuosine biosynthesis. Its function is as follows. Catalyzes the NADPH-dependent reduction of 7-cyano-7-deazaguanine (preQ0) to 7-aminomethyl-7-deazaguanine (preQ1). In Escherichia coli (strain UTI89 / UPEC), this protein is NADPH-dependent 7-cyano-7-deazaguanine reductase.